The primary structure comprises 213 residues: Protein ras-1 (213 aa).

A GTP-binding site is contributed by 15–22 (GGGGVGKS). The Effector region signature appears at 37 to 45 (YDPTIEDSY). GTP-binding positions include 62 to 66 (DTAGQ) and 121 to 124 (NKYD). Cys-210 carries the post-translational modification Cysteine methyl ester. Cys-210 is lipidated: S-farnesyl cysteine. Residues 211–213 (IMM) constitute a propeptide, removed in mature form.

Belongs to the small GTPase superfamily. Ras family.

It is found in the cell membrane. It catalyses the reaction GTP + H2O = GDP + phosphate + H(+). Its function is as follows. Ras proteins bind GDP/GTP and possess intrinsic GTPase activity. The sequence is that of Protein ras-1 (ras-1) from Neurospora crassa (strain ATCC 24698 / 74-OR23-1A / CBS 708.71 / DSM 1257 / FGSC 987).